The chain runs to 940 residues: Translation initiation factor IF-2 (940 aa).

4 disordered regions span residues P116–T137, E151–S196, A210–V294, and H318–R346. Residues L121–T137 are compositionally biased toward polar residues. Acidic residues predominate over residues P159–E180. The span at P181–E193 shows a compositional bias: low complexity. Positions K213–A239 are enriched in basic and acidic residues. Basic residues predominate over residues K282–V294. Low complexity predominate over residues G326 to S337. One can recognise a tr-type G domain in the interval A441–S610. Residues G450–T457 are G1. G450 to T457 lines the GTP pocket. The tract at residues G475–H479 is G2. The interval D496–G499 is G3. Residues D496–H500 and N550–D553 each bind GTP. Residues N550–D553 form a G4 region. The interval S586–Q588 is G5.

Belongs to the TRAFAC class translation factor GTPase superfamily. Classic translation factor GTPase family. IF-2 subfamily.

Its subcellular location is the cytoplasm. Its function is as follows. One of the essential components for the initiation of protein synthesis. Protects formylmethionyl-tRNA from spontaneous hydrolysis and promotes its binding to the 30S ribosomal subunits. Also involved in the hydrolysis of GTP during the formation of the 70S ribosomal complex. The protein is Translation initiation factor IF-2 of Teredinibacter turnerae (strain ATCC 39867 / T7901).